A 117-amino-acid chain; its full sequence is MGWSWIFLFLLSGTAGVHCQIQLQQSGPELVKPGASVKISCKASGYTFTDYYINWVKQRPGQGLEWIGWIYPGSGNTKYNEKFKGKATLTVDTSSSTAYMQLSSLTSEDSAVYFCAR.

An N-terminal signal peptide occupies residues 1-19; it reads MGWSWIFLFLLSGTAGVHC. The interval 20 to 49 is framework-1; the sequence is QIQLQQSGPELVKPGASVKISCKASGYTFT. The Ig-like domain maps to 31-117; that stretch reads VKPGASVKIS…EDSAVYFCAR (87 aa). The cysteines at positions 41 and 115 are disulfide-linked. A complementarity-determining-1 region spans residues 50–54; it reads DYYIN. Residues 55-68 form a framework-2 region; that stretch reads WVKQRPGQGLEWIG. Positions 69–85 are complementarity-determining-2; it reads WIYPGSGNTKYNEKFKG. Positions 86–117 are framework-3; it reads KATLTVDTSSSTAYMQLSSLTSEDSAVYFCAR.

The chain is Immunoglobulin heavy variable 1-84 from Mus musculus (Mouse).